The following is a 353-amino-acid chain: Methylthioribose-1-phosphate isomerase (353 aa).

Residues 51–53 (RGA), R94, and Q203 contribute to the substrate site. D244 serves as the catalytic Proton donor. 254–255 (NK) provides a ligand contact to substrate.

This sequence belongs to the eIF-2B alpha/beta/delta subunits family. MtnA subfamily.

It catalyses the reaction 5-(methylsulfanyl)-alpha-D-ribose 1-phosphate = 5-(methylsulfanyl)-D-ribulose 1-phosphate. The protein operates within amino-acid biosynthesis; L-methionine biosynthesis via salvage pathway; L-methionine from S-methyl-5-thio-alpha-D-ribose 1-phosphate: step 1/6. Functionally, catalyzes the interconversion of methylthioribose-1-phosphate (MTR-1-P) into methylthioribulose-1-phosphate (MTRu-1-P). In Trichodesmium erythraeum (strain IMS101), this protein is Methylthioribose-1-phosphate isomerase.